Consider the following 66-residue polypeptide: Ribosome biogenesis protein Nop10 (66 aa).

This sequence belongs to the NOP10 family.

Involved in ribosome biogenesis; more specifically in 18S rRNA pseudouridylation and in cleavage of pre-rRNA. The protein is Ribosome biogenesis protein Nop10 of Desulfurococcus amylolyticus (strain DSM 18924 / JCM 16383 / VKM B-2413 / 1221n) (Desulfurococcus kamchatkensis).